Consider the following 151-residue polypeptide: GTP-dependent dephospho-CoA kinase (151 aa).

Positions 30, 31, 49, 51, and 104 each coordinate GTP.

The protein belongs to the GTP-dependent DPCK family.

The enzyme catalyses 3'-dephospho-CoA + GTP = GDP + CoA + H(+). The protein operates within cofactor biosynthesis; coenzyme A biosynthesis. In terms of biological role, catalyzes the GTP-dependent phosphorylation of the 3'-hydroxyl group of dephosphocoenzyme A to form coenzyme A (CoA). In Cenarchaeum symbiosum (strain A), this protein is GTP-dependent dephospho-CoA kinase.